The following is a 431-amino-acid chain: Glutamyl-tRNA reductase (431 aa).

Substrate contacts are provided by residues 49 to 52, serine 109, 114 to 116, and glutamine 120; these read TCNR and EGQ. Cysteine 50 (nucleophile) is an active-site residue. Residue 189–194 participates in NADP(+) binding; the sequence is GAGKMS.

Belongs to the glutamyl-tRNA reductase family. As to quaternary structure, homodimer.

The catalysed reaction is (S)-4-amino-5-oxopentanoate + tRNA(Glu) + NADP(+) = L-glutamyl-tRNA(Glu) + NADPH + H(+). It participates in porphyrin-containing compound metabolism; protoporphyrin-IX biosynthesis; 5-aminolevulinate from L-glutamyl-tRNA(Glu): step 1/2. Its pathway is porphyrin-containing compound metabolism; chlorophyll biosynthesis. Functionally, catalyzes the NADPH-dependent reduction of glutamyl-tRNA(Glu) to glutamate 1-semialdehyde (GSA). The polypeptide is Glutamyl-tRNA reductase (Trichodesmium erythraeum (strain IMS101)).